A 164-amino-acid chain; its full sequence is MSDTFWAFVGLVLFLALLVYFQIPQKIIHHLDARAKRIKDELDEALRLREEAQEILAEYQRKHAEAEKDAQEIIAAAKHEVESVIAEARTKAEEYVKNRNKLAEQKIAQAEADAIRMVSSSAIDLAISTARVLIAKELDSNRADELVKEALSKESLSKMKTHLN.

The helical transmembrane segment at 4–24 threads the bilayer; that stretch reads TFWAFVGLVLFLALLVYFQIP.

This sequence belongs to the ATPase B chain family. As to quaternary structure, F-type ATPases have 2 components, F(1) - the catalytic core - and F(0) - the membrane proton channel. F(1) has five subunits: alpha(3), beta(3), gamma(1), delta(1), epsilon(1). F(0) has three main subunits: a(1), b(2) and c(10-14). The alpha and beta chains form an alternating ring which encloses part of the gamma chain. F(1) is attached to F(0) by a central stalk formed by the gamma and epsilon chains, while a peripheral stalk is formed by the delta and b chains.

It is found in the cell inner membrane. F(1)F(0) ATP synthase produces ATP from ADP in the presence of a proton or sodium gradient. F-type ATPases consist of two structural domains, F(1) containing the extramembraneous catalytic core and F(0) containing the membrane proton channel, linked together by a central stalk and a peripheral stalk. During catalysis, ATP synthesis in the catalytic domain of F(1) is coupled via a rotary mechanism of the central stalk subunits to proton translocation. Its function is as follows. Component of the F(0) channel, it forms part of the peripheral stalk, linking F(1) to F(0). The sequence is that of ATP synthase subunit b 2 from Bartonella tribocorum (strain CIP 105476 / IBS 506).